Reading from the N-terminus, the 160-residue chain is Cytochrome b6-f complex subunit 4 (160 aa).

The next 3 helical transmembrane spans lie at 36–56 (LLYI…GLAV), 95–115 (LLGV…PFLE), and 131–151 (TVFL…TLPI).

The protein belongs to the cytochrome b family. PetD subfamily. The 4 large subunits of the cytochrome b6-f complex are cytochrome b6, subunit IV (17 kDa polypeptide, petD), cytochrome f and the Rieske protein, while the 4 small subunits are petG, petL, petM and petN. The complex functions as a dimer.

It is found in the plastid. The protein localises to the chloroplast thylakoid membrane. Functionally, component of the cytochrome b6-f complex, which mediates electron transfer between photosystem II (PSII) and photosystem I (PSI), cyclic electron flow around PSI, and state transitions. In Solanum bulbocastanum (Wild potato), this protein is Cytochrome b6-f complex subunit 4.